A 382-amino-acid polypeptide reads, in one-letter code: Mannitol-1-phosphate 5-dehydrogenase (382 aa).

Position 3–14 (Ala3–Gly14) interacts with NAD(+). Position 269 is an N6-acetyllysine (Lys269).

Belongs to the mannitol dehydrogenase family.

It carries out the reaction D-mannitol 1-phosphate + NAD(+) = beta-D-fructose 6-phosphate + NADH + H(+). The sequence is that of Mannitol-1-phosphate 5-dehydrogenase from Escherichia coli O81 (strain ED1a).